We begin with the raw amino-acid sequence, 28 residues long: C-hordein (28 aa).

Residues 1–28 (RQLNPSSQELQSPQQSYLQQPYPQNPYL) are disordered.

Developing endosperm.

In terms of biological role, sulfur-poor seed storage protein. In Hordeum vulgare subsp. spontaneum (Wild barley), this protein is C-hordein.